The sequence spans 1022 residues: Protein trachealess (1022 aa).

The 54-residue stretch at 86–139 folds into the bHLH domain; sequence LRKEKSRDAARSRRGKENYEFYELAKMLPLPAAITSQLDKASIIRLTISYLKLR. Positions 174-244 constitute a PAS 1 domain; that stretch reads EQHQGTHILQ…DQLGLSLTSG (71 aa). Residues 239-289 form a disordered region; that stretch reads LSLTSGGGGGGGSSSSGGGGGGAGGGMASPTSGASDDGSGTHGTNNPDVAA. The span at 243-265 shows a compositional bias: gly residues; that stretch reads SGGGGGGGSSSSGGGGGGAGGGM. Positions 280–289 are enriched in polar residues; sequence HGTNNPDVAA. Residues 391–461 enclose the PAS 2 domain; that stretch reads PPPSVHEIRL…KSHSDLIEKG (71 aa). In terms of domain architecture, PAC spans 465-508; that stretch reads TGYYRLMNKSGGYTWLQTCATVVCSTKNADEQNIICVNYVISNR. 3 disordered regions span residues 525 to 686, 849 to 896, and 962 to 996; these read DSIK…ADSA, AMTP…GDVV, and DDQG…ASQA. 2 stretches are compositionally biased toward low complexity: residues 578–587 and 611–625; these read RSAAASHGSS and PTTV…TPPV. The Nuclear localization signal signature appears at 629 to 636; the sequence is KRKRKTKA. Ser-673 bears the Phosphoserine; by PKB/Akt1 mark. The segment covering 851-864 has biased composition (polar residues); it reads TPPSSVSPRDSNQP. A compositionally biased stretch (low complexity) spans 987 to 996; it reads GSAGSSASQA.

In terms of assembly, efficient DNA binding requires dimerization with another bHLH protein. Heterodimer with tgo. In terms of processing, ser-673 phosphorylation by PKB/Akt1 is required for nuclear targeting and transcriptional activity. Trachea, salivary gland ducts, posterior spiracles (Filzkoeper primordia) and a subset of cells in the CNS.

It localises to the nucleus. Functionally, transcription factor, master regulator of tracheal cell fates in the embryo, necessary for the development of the salivary gland duct, Malpighian tubules and the posterior spiracles. It may induce a general fate of branched tubular structures of epithelial origin. Functions with tgo to regulate expression of btl. The chain is Protein trachealess (trh) from Drosophila melanogaster (Fruit fly).